A 204-amino-acid chain; its full sequence is Large ribosomal subunit protein bL25 (204 aa).

The tract at residues 1–20 (MSETYELKAETRDRVGKGSS) is disordered.

It belongs to the bacterial ribosomal protein bL25 family. CTC subfamily. Part of the 50S ribosomal subunit; part of the 5S rRNA/L5/L18/L25 subcomplex. Contacts the 5S rRNA. Binds to the 5S rRNA independently of L5 and L18.

Functionally, this is one of the proteins that binds to the 5S RNA in the ribosome where it forms part of the central protuberance. The polypeptide is Large ribosomal subunit protein bL25 (Rhizobium meliloti (strain 1021) (Ensifer meliloti)).